We begin with the raw amino-acid sequence, 142 residues long: HTH-type transcriptional regulator MntR (142 aa).

The 63-residue stretch at 1–63 folds into the HTH dtxR-type domain; the sequence is MPTPSMEDYI…YEKYRGLVLT (63 aa). Positions 8, 11, 77, 99, 102, and 103 each coordinate Mn(2+).

This sequence belongs to the DtxR/MntR family. Homodimer.

The protein resides in the cytoplasm. DNA binding is strongly activated by Mn(2+). Functionally, central regulator of manganese homeostasis. The protein is HTH-type transcriptional regulator MntR of Bacillus cereus (strain AH820).